The chain runs to 577 residues: Arginine--tRNA ligase (577 aa).

Positions 122–132 (PNVAKEMHVGH) match the 'HIGH' region motif.

Belongs to the class-I aminoacyl-tRNA synthetase family. In terms of assembly, monomer.

Its subcellular location is the cytoplasm. It catalyses the reaction tRNA(Arg) + L-arginine + ATP = L-arginyl-tRNA(Arg) + AMP + diphosphate. This Salmonella newport (strain SL254) protein is Arginine--tRNA ligase.